Reading from the N-terminus, the 293-residue chain is Elongation factor Ts (293 aa).

The tract at residues 80 to 83 is involved in Mg(2+) ion dislocation from EF-Tu; it reads TDFV.

This sequence belongs to the EF-Ts family.

The protein localises to the cytoplasm. In terms of biological role, associates with the EF-Tu.GDP complex and induces the exchange of GDP to GTP. It remains bound to the aminoacyl-tRNA.EF-Tu.GTP complex up to the GTP hydrolysis stage on the ribosome. This is Elongation factor Ts from Herminiimonas arsenicoxydans.